The primary structure comprises 137 residues: Holo-[acyl-carrier-protein] synthase (137 aa).

Mg(2+) contacts are provided by aspartate 8 and glutamate 58.

It belongs to the P-Pant transferase superfamily. AcpS family. Mg(2+) serves as cofactor.

The protein localises to the cytoplasm. It catalyses the reaction apo-[ACP] + CoA = holo-[ACP] + adenosine 3',5'-bisphosphate + H(+). Its function is as follows. Transfers the 4'-phosphopantetheine moiety from coenzyme A to a Ser of acyl-carrier-protein. This chain is Holo-[acyl-carrier-protein] synthase, found in Lactobacillus delbrueckii subsp. bulgaricus (strain ATCC 11842 / DSM 20081 / BCRC 10696 / JCM 1002 / NBRC 13953 / NCIMB 11778 / NCTC 12712 / WDCM 00102 / Lb 14).